Consider the following 141-residue polypeptide: Hemoglobin subunit alpha (141 aa).

The Globin domain maps to V1–R141. Residue S3 is modified to Phosphoserine. An N6-succinyllysine mark is found at K7 and K11. The residue at position 16 (K16) is an N6-acetyllysine; alternate. Position 16 is an N6-succinyllysine; alternate (K16). Y24 bears the Phosphotyrosine mark. Position 35 is a phosphoserine (S35). The residue at position 40 (K40) is an N6-succinyllysine. At S49 the chain carries Phosphoserine. H58 serves as a coordination point for O2. H87 provides a ligand contact to heme b. Position 102 is a phosphoserine (S102). Phosphothreonine is present on T108. S124 bears the Phosphoserine mark. Phosphothreonine is present on residues T134 and T137. The residue at position 138 (S138) is a Phosphoserine.

This sequence belongs to the globin family. As to quaternary structure, heterotetramer of two alpha chains and two beta chains. As to expression, red blood cells.

Functionally, involved in oxygen transport from the lung to the various peripheral tissues. Its function is as follows. Hemopressin acts as an antagonist peptide of the cannabinoid receptor CNR1. Hemopressin-binding efficiently blocks cannabinoid receptor CNR1 and subsequent signaling. The polypeptide is Hemoglobin subunit alpha (HBA) (Tupaia glis (Common tree shrew)).